The primary structure comprises 329 residues: 3-dehydroquinate synthase (329 aa).

It belongs to the archaeal-type DHQ synthase family.

It catalyses the reaction 2-amino-2,3,7-trideoxy-D-lyxo-hept-6-ulosonate + NAD(+) + H2O = 3-dehydroquinate + NH4(+) + NADH + H(+). Catalyzes the oxidative deamination and cyclization of 2-amino-3,7-dideoxy-D-threo-hept-6-ulosonic acid (ADH) to yield 3-dehydroquinate (DHQ), which is fed into the canonical shikimic pathway of aromatic amino acid biosynthesis. In Methanoregula boonei (strain DSM 21154 / JCM 14090 / 6A8), this protein is 3-dehydroquinate synthase.